The primary structure comprises 539 residues: UDP-N-acetylmuramate--L-alanine ligase (539 aa).

165–171 (GTHGKTT) is a binding site for ATP.

This sequence belongs to the MurCDEF family.

Its subcellular location is the cytoplasm. The enzyme catalyses UDP-N-acetyl-alpha-D-muramate + L-alanine + ATP = UDP-N-acetyl-alpha-D-muramoyl-L-alanine + ADP + phosphate + H(+). Its pathway is cell wall biogenesis; peptidoglycan biosynthesis. In terms of biological role, cell wall formation. The polypeptide is UDP-N-acetylmuramate--L-alanine ligase (Trichodesmium erythraeum (strain IMS101)).